A 654-amino-acid polypeptide reads, in one-letter code: MLSVPHLDRDFDYLVPAEHSDDAQPGVRVRVRFHGRLVDGFVLERRSDSDHHGKLGWLDRVVSPEPVLTTEIRRLVDAVAARYAGTRQDVLRLAVPARHARVEREITTAPGRPVVAPVDPSGWAAYGRGRQFLAALADSRAARAVWQALPGELWADRFAEAAAQTVRAGRTVLAIVPDQRDLDTLWQAATALVDEHSVVALSAGLGPEARYRRWLAALRGSARLVIGTRSAVFAPLSELGLVMVWADADDSLAEPRAPYPHAREVAMLRAHQARCAALIGGYARTAEAHALVRSGWAHDVVAPRPEVRARSPRVVALDDSGYDDARDPAARTARLPSYRWRRGSALQSGAPVLVQVPRRGYIPSLACGRCRAIARCRSCTGPLSLQGAGSPGAVCRWCGRVDPTLRCVRCGSDVVRAVVVGARRTAEELGRAFPGTAVITSAGDTLVPQLDAGPALVVATPGAEPRAPGGYGAALLLDSWALLGRQDLRAAEDALWRWMTAAALVRPRGAGGVVTVVAESSIPTVQSLIRWDPVGHAEAELAARTEVGLPPSVHIAALDGPAGTVTALLEAARLPDPDRLQADLLGPVDLPPGVRRPAGIPADAPVIRMLLRVCREQGLELAASLRRGIGVLSARQTRQTRSLVRVQIDPLHIG.

8 residues coordinate Zn(2+): C367, C370, C376, C379, C395, C398, C407, and C410.

This sequence belongs to the helicase family. PriA subfamily. Component of the replication restart primosome. Zn(2+) is required as a cofactor.

Functionally, initiates the restart of stalled replication forks, which reloads the replicative helicase on sites other than the origin of replication. Recognizes and binds to abandoned replication forks and remodels them to uncover a helicase loading site. Promotes assembly of the primosome at these replication forks. This is Probable replication restart protein PriA from Mycobacterium tuberculosis (strain CDC 1551 / Oshkosh).